A 238-amino-acid polypeptide reads, in one-letter code: Orotidine 5'-phosphate decarboxylase (238 aa).

Substrate is bound by residues Asp10, Lys32, 59–68 (DLKLHDIPNT), Thr122, Arg184, Gln193, Gly213, and Arg214. Residue Lys61 is the Proton donor of the active site.

This sequence belongs to the OMP decarboxylase family. Type 1 subfamily. Homodimer.

The catalysed reaction is orotidine 5'-phosphate + H(+) = UMP + CO2. Its pathway is pyrimidine metabolism; UMP biosynthesis via de novo pathway; UMP from orotate: step 2/2. Its function is as follows. Catalyzes the decarboxylation of orotidine 5'-monophosphate (OMP) to uridine 5'-monophosphate (UMP). This chain is Orotidine 5'-phosphate decarboxylase, found in Bacillus mycoides (strain KBAB4) (Bacillus weihenstephanensis).